We begin with the raw amino-acid sequence, 1178 residues long: DNA-directed RNA polymerase subunit beta' (1178 aa).

4 residues coordinate Zn(2+): cysteine 60, cysteine 62, cysteine 75, and cysteine 78. Mg(2+) contacts are provided by aspartate 450, aspartate 452, and aspartate 454. Zn(2+)-binding residues include cysteine 795, cysteine 869, cysteine 876, and cysteine 879.

It belongs to the RNA polymerase beta' chain family. In terms of assembly, the RNAP catalytic core consists of 2 alpha, 1 beta, 1 beta' and 1 omega subunit. When a sigma factor is associated with the core the holoenzyme is formed, which can initiate transcription. Mg(2+) serves as cofactor. Zn(2+) is required as a cofactor.

The catalysed reaction is RNA(n) + a ribonucleoside 5'-triphosphate = RNA(n+1) + diphosphate. DNA-dependent RNA polymerase catalyzes the transcription of DNA into RNA using the four ribonucleoside triphosphates as substrates. In Clostridium botulinum (strain ATCC 19397 / Type A), this protein is DNA-directed RNA polymerase subunit beta'.